A 526-amino-acid polypeptide reads, in one-letter code: O-phosphoserine--tRNA(Cys) ligase (526 aa).

Substrate-binding positions include 189–191, 234–236, 276–277, and Asn319; these read HMT, SAS, and YY.

This sequence belongs to the class-II aminoacyl-tRNA synthetase family. O-phosphoseryl-tRNA(Cys) synthetase subfamily. In terms of assembly, homotetramer. Interacts with SepCysS.

It carries out the reaction tRNA(Cys) + O-phospho-L-serine + ATP = O-phospho-L-seryl-tRNA(Cys) + AMP + diphosphate. Its function is as follows. Catalyzes the attachment of O-phosphoserine (Sep) to tRNA(Cys). In Methanocorpusculum labreanum (strain ATCC 43576 / DSM 4855 / Z), this protein is O-phosphoserine--tRNA(Cys) ligase.